Here is a 313-residue protein sequence, read N- to C-terminus: 2,3-dihydroxyphenylpropionate/2,3-dihydroxicinnamic acid 1,2-dioxygenase (313 aa).

His115 acts as the Proton donor in catalysis. Residue His179 is the Proton acceptor of the active site.

It belongs to the LigB/MhpB extradiol dioxygenase family. In terms of assembly, homotetramer. Fe(2+) serves as cofactor.

The enzyme catalyses 3-(2,3-dihydroxyphenyl)propanoate + O2 = (2Z,4E)-2-hydroxy-6-oxonona-2,4-dienedioate + H(+). The catalysed reaction is (2E)-3-(2,3-dihydroxyphenyl)prop-2-enoate + O2 = (2Z,4E,7E)-2-hydroxy-6-oxonona-2,4,7-trienedioate + H(+). It participates in aromatic compound metabolism; 3-phenylpropanoate degradation. Its function is as follows. Catalyzes the non-heme iron(II)-dependent oxidative cleavage of 2,3-dihydroxyphenylpropionic acid and 2,3-dihydroxicinnamic acid into 2-hydroxy-6-ketononadienedioate and 2-hydroxy-6-ketononatrienedioate, respectively. The sequence is that of 2,3-dihydroxyphenylpropionate/2,3-dihydroxicinnamic acid 1,2-dioxygenase from Mycobacterium ulcerans (strain Agy99).